The following is a 209-amino-acid chain: MIAIIDYGMGNIRSVEQALKHIGAAYIVTSDKEEIFRSDGVILPGVGAFPKAMDVLEEKDLVRVLQEIGRSRKPLLGICLGMQLLFEKSEELQDCNGLSLLPGVIRKLKVPYKIPHMGWNELKKEGEIALWNGVEDGSFVYYVHSYYADCPNEIVYGISDYGVKVPGFVAKENIYGAQFHPEKSGDIGMQMLKNFKGVVESWKSSQLSI.

In terms of domain architecture, Glutamine amidotransferase type-1 spans 1–205 (MIAIIDYGMG…KGVVESWKSS (205 aa)). The active-site Nucleophile is C79. Active-site residues include H180 and E182.

As to quaternary structure, heterodimer of HisH and HisF.

Its subcellular location is the cytoplasm. It carries out the reaction 5-[(5-phospho-1-deoxy-D-ribulos-1-ylimino)methylamino]-1-(5-phospho-beta-D-ribosyl)imidazole-4-carboxamide + L-glutamine = D-erythro-1-(imidazol-4-yl)glycerol 3-phosphate + 5-amino-1-(5-phospho-beta-D-ribosyl)imidazole-4-carboxamide + L-glutamate + H(+). The enzyme catalyses L-glutamine + H2O = L-glutamate + NH4(+). Its pathway is amino-acid biosynthesis; L-histidine biosynthesis; L-histidine from 5-phospho-alpha-D-ribose 1-diphosphate: step 5/9. Its function is as follows. IGPS catalyzes the conversion of PRFAR and glutamine to IGP, AICAR and glutamate. The HisH subunit catalyzes the hydrolysis of glutamine to glutamate and ammonia as part of the synthesis of IGP and AICAR. The resulting ammonia molecule is channeled to the active site of HisF. The sequence is that of Imidazole glycerol phosphate synthase subunit HisH from Bacillus cereus (strain ATCC 10987 / NRS 248).